The primary structure comprises 170 residues: Endoribonuclease YbeY (170 aa).

H128, H132, and H138 together coordinate Zn(2+).

Belongs to the endoribonuclease YbeY family. Zn(2+) serves as cofactor.

It localises to the cytoplasm. In terms of biological role, single strand-specific metallo-endoribonuclease involved in late-stage 70S ribosome quality control and in maturation of the 3' terminus of the 16S rRNA. This Ruegeria sp. (strain TM1040) (Silicibacter sp.) protein is Endoribonuclease YbeY.